A 1037-amino-acid chain; its full sequence is Nucleoporin NUP120 (1037 aa).

Leucine-zipper stretches follow at residues 131–152 (LQLP…WFHL) and 290–311 (LLPL…SGIL). Threonine 417 bears the Phosphothreonine mark.

In terms of assembly, component of the nuclear pore complex (NPC). NPC constitutes the exclusive means of nucleocytoplasmic transport. NPCs allow the passive diffusion of ions and small molecules and the active, nuclear transport receptor-mediated bidirectional transport of macromolecules such as proteins, RNAs, ribonucleoparticles (RNPs), and ribosomal subunits across the nuclear envelope. Due to its 8-fold rotational symmetry, all subunits are present with 8 copies or multiples thereof. NUP120 is part of the heptameric 0.5 MDa autoassembling NUP84 NPC subcomplex (NUP84, NUP85, NUP120, NUP133, NUP145C, SEC13 and SEH1).

It localises to the nucleus. The protein localises to the nuclear pore complex. It is found in the nucleus membrane. Functionally, functions as a component of the nuclear pore complex (NPC). NPC components, collectively referred to as nucleoporins (NUPs), can play the role of both NPC structural components and of docking or interaction partners for transiently associated nuclear transport factors. NUP120 is involved in nuclear poly(A)+ RNA and pre-ribosome export, in GSP1 nuclear import, in NPC assembly and distribution, as well as in nuclear envelope organization. The chain is Nucleoporin NUP120 (NUP120) from Saccharomyces cerevisiae (strain ATCC 204508 / S288c) (Baker's yeast).